A 208-amino-acid polypeptide reads, in one-letter code: Granulocyte colony-stimulating factor (208 aa).

The first 30 residues, 1-30 (MAQLSAQRRMKLMALQLLLWQSALWSGREA), serve as a signal peptide directing secretion. 2 cysteine pairs are disulfide-bonded: C72–C78 and C100–C110. An O-linked (GalNAc...) threonine glycan is attached at T169.

The protein belongs to the IL-6 superfamily. Monomer. O-glycosylated.

It localises to the secreted. Its function is as follows. Granulocyte/macrophage colony-stimulating factors are cytokines that act in hematopoiesis by controlling the production, differentiation, and function of 2 related white cell populations of the blood, the granulocytes and the monocytes-macrophages. This CSF induces granulocytes. The sequence is that of Granulocyte colony-stimulating factor (Csf3) from Mus musculus (Mouse).